A 534-amino-acid polypeptide reads, in one-letter code: Glucans biosynthesis protein D (534 aa).

The segment at residues 1 to 30 (MRMQRRHLLKNAAAALAALGLPALPQWALA) is a signal peptide (tat-type signal).

The protein belongs to the OpgD/OpgG family. Post-translationally, predicted to be exported by the Tat system. The position of the signal peptide cleavage has not been experimentally proven.

The protein resides in the periplasm. The protein operates within glycan metabolism; osmoregulated periplasmic glucan (OPG) biosynthesis. Its function is as follows. Probably involved in the control of the structural glucose backbone of osmoregulated periplasmic glucans (OPGs). In Xanthomonas oryzae pv. oryzae (strain KACC10331 / KXO85), this protein is Glucans biosynthesis protein D.